Here is a 346-residue protein sequence, read N- to C-terminus: Ribosomal RNA small subunit methyltransferase H (346 aa).

Residues 46–48 (GGY), D63, F90, D113, and Q120 contribute to the S-adenosyl-L-methionine site. The disordered stretch occupies residues 270-346 (GGSAGSRHMP…LPETNELARS (77 aa)).

It belongs to the methyltransferase superfamily. RsmH family.

The protein resides in the cytoplasm. It carries out the reaction cytidine(1402) in 16S rRNA + S-adenosyl-L-methionine = N(4)-methylcytidine(1402) in 16S rRNA + S-adenosyl-L-homocysteine + H(+). In terms of biological role, specifically methylates the N4 position of cytidine in position 1402 (C1402) of 16S rRNA. This is Ribosomal RNA small subunit methyltransferase H from Brucella abortus (strain S19).